Here is a 209-residue protein sequence, read N- to C-terminus: MALLAEHLLRPLPADKQIETGPFLEAVSHLPPFFDCLGSPVFTPIKADISGNITKIKAVYDTNPTKFRTLQNILEVEKEMYGAEWPKVGATLALMWLKRGLRFIQVFLQSICDGERDENHPNLIRVNATKAYEMALKKYHGWIVQKIFQAALYAAPYKSDFLKALSKGQNVTEEECLEKVRLFLVNYTATIDVIYEMYTRMNAELNYKV.

Ala2 bears the N-acetylalanine mark. 2 consecutive repeat copies span residues Ile45–Lys55 and Ile56–Lys66. Residues Ile45–Lys66 form a 2 X 12 AA approximate tandem repeats region. Asp48–Lys55 is a beta-D-galactosyl-(1-&gt;4)-beta-D-glucosyl-(1&lt;-&gt;1)-N-[(9Z)-octadecenoyl]-sphing-4-enine binding site. Residues His140 and Tyr207 each coordinate beta-D-galactosyl-(1-&gt;4)-beta-D-glucosyl-(1&lt;-&gt;1)-N-[(9Z)-octadecenoyl]-sphing-4-enine.

It belongs to the GLTP family. In terms of assembly, monomer.

The protein localises to the cytoplasm. Functionally, accelerates the intermembrane transfer of various glycolipids. Catalyzes the transfer of various glycosphingolipids between membranes but does not catalyze the transfer of phospholipids. May be involved in the intracellular translocation of glucosylceramides. This is Glycolipid transfer protein (GLTP) from Sus scrofa (Pig).